Here is a 366-residue protein sequence, read N- to C-terminus: MKVLVGLSGGVDSAVAAKLLIDQGYDVTGVTMQLLPKLSGIYKEQTDDIEDAKKVADKLGIKHIVYDMRETFKTEIIDYFVEEYKQGRTPNPCFICNSKIKFGLFLEQALKDGFDKIATGHYAKIEKTEIEGDERFLLRQAEDAQKDQSYFLALLTQEQLSRSIFPLGDFTKEKVRSIAEDAGLINAHRPDSQDICFVPDDDYTRVINALAAGSFKEGKFIDTMGNEIGRHKGLQYYTIGQRRGLAIAMGYPVYVVKKDAKTNTVTVGKDEELFAESLIASRVNIILKKTIDKEIDIEVKTRYRQQKKKAKLIPLKNEEFKPTGKFKVEFIEPEKAVAEGQAAVFYTGDYIIGGGIIESVERLGIL.

ATP is bound by residues 6–13 and methionine 32; that span reads GLSGGVDS. Catalysis depends on cysteine 96, which acts as the Nucleophile. Cysteine 96 and cysteine 196 are oxidised to a cystine. Glycine 120 lines the ATP pocket. The tract at residues 146 to 148 is interaction with tRNA; sequence KDQ. The Cysteine persulfide intermediate role is filled by cysteine 196. Positions 302–303 are interaction with tRNA; that stretch reads RY.

It belongs to the MnmA/TRMU family.

It localises to the cytoplasm. It catalyses the reaction S-sulfanyl-L-cysteinyl-[protein] + uridine(34) in tRNA + AH2 + ATP = 2-thiouridine(34) in tRNA + L-cysteinyl-[protein] + A + AMP + diphosphate + H(+). Functionally, catalyzes the 2-thiolation of uridine at the wobble position (U34) of tRNA, leading to the formation of s(2)U34. This Treponema denticola (strain ATCC 35405 / DSM 14222 / CIP 103919 / JCM 8153 / KCTC 15104) protein is tRNA-specific 2-thiouridylase MnmA.